A 315-amino-acid polypeptide reads, in one-letter code: Homoserine kinase (315 aa).

91–101 provides a ligand contact to ATP; sequence PIGSGLGSSAS.

This sequence belongs to the GHMP kinase family. Homoserine kinase subfamily.

It is found in the cytoplasm. The enzyme catalyses L-homoserine + ATP = O-phospho-L-homoserine + ADP + H(+). It functions in the pathway amino-acid biosynthesis; L-threonine biosynthesis; L-threonine from L-aspartate: step 4/5. In terms of biological role, catalyzes the ATP-dependent phosphorylation of L-homoserine to L-homoserine phosphate. The protein is Homoserine kinase of Buchnera aphidicola subsp. Cinara cedri (strain Cc).